Reading from the N-terminus, the 333-residue chain is Prenyltransferase stbC (333 aa).

8 consecutive transmembrane segments (helical) span residues 74 to 94 (VAFQ…AGCA), 125 to 145 (ANIF…PLPA), 147 to 164 (CQRL…YPFC), 173 to 193 (VILG…AGLP), 201 to 221 (VPTI…DVVY), 247 to 267 (ILLT…GVLV), 272 to 292 (YFFV…IGGI), and 304 to 324 (SGWF…IEYL).

Belongs to the UbiA prenyltransferase family.

Its subcellular location is the membrane. The catalysed reaction is orsellinate + (2E,6E)-farnesyl diphosphate = ilicicolinate B + diphosphate. Its pathway is secondary metabolite biosynthesis; terpenoid biosynthesis. Its function is as follows. Prenyltransferase; part of the cluster that mediates the biosynthesis of LL-Z1272-beta, also known as ilicicolin B, a prenylated aryl-aldehyde produced by several fungi and that serves as a key pathway intermediate for many fungal meroterpenoids. The first step in the pathway is performed by the non-reducing polyketide synthase stbA that produces orsellinic acid by condensing acetyl-CoA with 3 malonyl-CoA units. The prenyltransferase stbC then prenylates orsenilic acid into grifolic acid. Finally, grifolic acid is reduced to ilicicolin B by the NRPS-like protein stbB. The protein is Prenyltransferase stbC of Stachybotrys bisbyi (Hyalostachybotrys bisbyi).